Reading from the N-terminus, the 107-residue chain is Ig kappa chain V-VI region SAPC 10 (107 aa).

Positions 1–23 (EIVLTQSPAITAASLGQKVTITC) are framework-1. A disulfide bridge links cysteine 23 with cysteine 87. The segment at 24-33 (SASSSVSYMH) is complementarity-determining-1. The segment at 34–48 (WYQQKSGTSPKPWIY) is framework-2. Residues 49–55 (EISKLAS) are complementarity-determining-2. Residues 56-87 (GVPARFSGSGSGTSYSLTISSMEAEDAAIYYC) are framework-3. Residues 88 to 96 (QQWNYPLIT) form a complementarity-determining-3 region. The interval 97–106 (FGGGTKLEIK) is framework-4.

The sequence is that of Ig kappa chain V-VI region SAPC 10 from Mus musculus (Mouse).